The sequence spans 463 residues: Succinate--CoA ligase [ADP-forming] subunit beta, mitochondrial (463 aa).

The transit peptide at 1-53 (MAASMFYGRQLAAAALRSHRPQTTLRAAAQVLGNSGLFNKHGLQVQQQQQRTL) directs the protein to the mitochondrion. Positions 61–288 (MELLQEAGVS…SNSAYRQKKI (228 aa)) constitute an ATP-grasp domain. K78 bears the N6-acetyllysine mark. Residue Y84 is modified to Phosphotyrosine. An N6-acetyllysine; alternate modification is found at K88. K88 is subject to N6-succinyllysine; alternate. ATP is bound by residues K98 and 105–107 (GRG). N6-acetyllysine occurs at positions 129, 139, 143, and 216. Residues N258 and D272 each coordinate Mg(2+). Phosphoserine is present on S279. N323 is a binding site for substrate. T341 carries the post-translational modification Phosphothreonine. K368 is modified (N6-acetyllysine). 380-382 (GIM) provides a ligand contact to substrate. Residue K438 is modified to N6-acetyllysine.

It belongs to the succinate/malate CoA ligase beta subunit family. ATP-specific subunit beta subfamily. As to quaternary structure, heterodimer of an alpha and a beta subunit. The beta subunit determines specificity for ATP. Interacts with ALAS2. Mg(2+) is required as a cofactor.

The protein localises to the mitochondrion. The catalysed reaction is succinate + ATP + CoA = succinyl-CoA + ADP + phosphate. It participates in carbohydrate metabolism; tricarboxylic acid cycle; succinate from succinyl-CoA (ligase route): step 1/1. Its function is as follows. ATP-specific succinyl-CoA synthetase functions in the citric acid cycle (TCA), coupling the hydrolysis of succinyl-CoA to the synthesis of ATP and thus represents the only step of substrate-level phosphorylation in the TCA. The beta subunit provides nucleotide specificity of the enzyme and binds the substrate succinate, while the binding sites for coenzyme A and phosphate are found in the alpha subunit. The polypeptide is Succinate--CoA ligase [ADP-forming] subunit beta, mitochondrial (Mus musculus (Mouse)).